The following is a 473-amino-acid chain: Argininosuccinate lyase (473 aa).

It belongs to the lyase 1 family. Argininosuccinate lyase subfamily.

It localises to the cytoplasm. The enzyme catalyses 2-(N(omega)-L-arginino)succinate = fumarate + L-arginine. The protein operates within amino-acid biosynthesis; L-arginine biosynthesis; L-arginine from L-ornithine and carbamoyl phosphate: step 3/3. The sequence is that of Argininosuccinate lyase from Streptomyces clavuligerus.